Reading from the N-terminus, the 391-residue chain is Na(+)/H(+) antiporter NhaA 1 (391 aa).

Helical transmembrane passes span 19–39 (FLASESAGGIVLMAAALAALI), 56–76 (VWLGLSVELWINDGLMAIFFL), 98–118 (ALPGFAAAGGMLVPALIYIAI), 128–148 (GWAIPAATDIAFALGVLSLLG), 157–177 (VFLAALAILDDLGAVTIIAFF), 180–200 (SGLNLPMLAAAFATLAVLIAL), 208–228 (LLPYLLLGALLWFFVLQSGVH), 264–284 (VAFAVVPIFGFANAGVSLSGI), 297–317 (VALGLFVGKQIGVFLAAVLAI), 335–355 (GVAILCGIGFTMSLFIGNLAF), and 364–384 (EVKVGVLIGSGLAAIAGILLL).

The protein belongs to the NhaA Na(+)/H(+) (TC 2.A.33) antiporter family.

It is found in the cell inner membrane. The enzyme catalyses Na(+)(in) + 2 H(+)(out) = Na(+)(out) + 2 H(+)(in). In terms of biological role, na(+)/H(+) antiporter that extrudes sodium in exchange for external protons. In Pseudomonas savastanoi pv. phaseolicola (strain 1448A / Race 6) (Pseudomonas syringae pv. phaseolicola (strain 1448A / Race 6)), this protein is Na(+)/H(+) antiporter NhaA 1.